The primary structure comprises 617 residues: mRNA-decapping enzyme 1B (617 aa).

A2 carries the N-acetylalanine modification. S147 bears the Phosphoserine mark. Y191 carries the phosphotyrosine modification. Disordered regions lie at residues N195–E222 and T243–I266. A compositionally biased stretch (polar residues) spans S205–L219. The span at Q252–Q261 shows a compositional bias: low complexity. Residues S275 and S336 each carry the phosphoserine modification. The disordered stretch occupies residues T362 to Q426. A compositionally biased stretch (low complexity) spans P371–A381. T392 bears the Phosphothreonine mark. S448 and S511 each carry phosphoserine.

The protein belongs to the DCP1 family. As to quaternary structure, interacts with DCP1A. (Microbial infection) Interacts with rotavirus A non-structural protein 2; this interaction probably plays a role in the sequestration of DCP1B in viral factories. Interacts with rotavirus A non-structural protein 5; this interaction probably plays a role in its sequestration in viral factories.

It localises to the cytoplasm. The protein resides in the nucleus. The enzyme catalyses a 5'-end (N(7)-methyl 5'-triphosphoguanosine)-ribonucleoside in mRNA + H2O = N(7)-methyl-GDP + a 5'-end phospho-ribonucleoside in mRNA + 2 H(+). Functionally, may play a role in the degradation of mRNAs, both in normal mRNA turnover and in nonsense-mediated mRNA decay. May remove the 7-methyl guanine cap structure from mRNA molecules, yielding a 5'-phosphorylated mRNA fragment and 7m-GDP. The polypeptide is mRNA-decapping enzyme 1B (DCP1B) (Homo sapiens (Human)).